The primary structure comprises 978 residues: Mast/stem cell growth factor receptor Kit (978 aa).

The first 25 residues, 1-25 (MRGARGAWDFLFVLLLLLLVQTGSS), serve as a signal peptide directing secretion. Residues 26-525 (QPSVSPGELS…QIHAHTLFTP (500 aa)) lie on the Extracellular side of the membrane. 5 Ig-like C2-type domains span residues 27–112 (PSVS…VFVR), 121–205 (DLPL…LKVR), 212–309 (PVVS…LEVV), 318–411 (PMMN…VNVN), and 414–508 (PEIL…FNFA). Cysteines 58 and 97 form a disulfide. N-linked (GlcNAc...) asparagine glycans are attached at residues asparagine 94, asparagine 130, and asparagine 145. 3 disulfide bridges follow: cysteine 136–cysteine 186, cysteine 151–cysteine 183, and cysteine 233–cysteine 291. 9 N-linked (GlcNAc...) asparagine glycosylation sites follow: asparagine 284, asparagine 294, asparagine 301, asparagine 321, asparagine 353, asparagine 368, asparagine 401, asparagine 464, and asparagine 487. Cysteine 429 and cysteine 492 form a disulfide bridge. Residues 526–546 (LLIGFVIAAGLMCIFVMILTY) form a helical membrane-spanning segment. Topologically, residues 547 to 978 (KYLQKPMYEV…TQPLLVHEDV (432 aa)) are cytoplasmic. 2 positions are modified to phosphotyrosine: tyrosine 548 and tyrosine 554. Position 569 (tyrosine 569) interacts with Mg(2+). Phosphotyrosine; by autocatalysis is present on residues tyrosine 569 and tyrosine 571. An important for interaction with phosphotyrosine-binding proteins region spans residues 569 to 571 (YVY). The region spanning 590 to 939 (LSFGKTLGAG…ISESTNHIYS (350 aa)) is the Protein kinase domain. ATP-binding positions include 597–604 (GAGAFGKV), lysine 624, and 672–678 (EYCCYGD). Phosphotyrosine; by autocatalysis is present on residues tyrosine 704 and tyrosine 722. At tyrosine 731 the chain carries Phosphotyrosine. A phosphoserine; by PKC/PRKCA mark is found at serine 743 and serine 748. The Proton acceptor role is filled by aspartate 794. Arginine 798 lines the ATP pocket. 2 residues coordinate Mg(2+): asparagine 799 and aspartate 812. Serine 823 carries the phosphoserine modification. Tyrosine 825 is subject to Phosphotyrosine; by autocatalysis. Serine 893 bears the Phosphoserine mark. Tyrosine 902 is modified (phosphotyrosine). At tyrosine 938 the chain carries Phosphotyrosine; by autocatalysis. Serine 961 bears the Phosphoserine mark.

This sequence belongs to the protein kinase superfamily. Tyr protein kinase family. CSF-1/PDGF receptor subfamily. In terms of assembly, monomer in the absence of bound KITLG/SCF. Homodimer in the presence of bound KITLG/SCF, forming a heterotetramer with two KITLG/SCF molecules. Interacts (via phosphorylated tyrosine residues) with the adapter proteins GRB2 and GRB7 (via SH2 domain), and SH2B2/APS. Interacts (via C-terminus) with MPDZ (via the tenth PDZ domain). Interacts (via phosphorylated tyrosine residues) with PIK3R1 and PIK3CD. Interacts (via phosphorylated tyrosine) with CRK (isoform Crk-II), FYN, SHC1 and MATK/CHK (via SH2 domain). Interacts with LYN and FES/FPS. Interacts (via phosphorylated tyrosine residues) with the protein phosphatases PTPN6/SHP-1 (via SH2 domain), PTPN11/SHP-2 (via SH2 domain) and PTPRU. Interacts with PLCG1. Interacts with DOK1 and TEC. Interacts with IL1RAP (independent of stimulation with KITLG/SCF). A mast cell-specific KITLG/SCF-induced interleukin-33 signaling complex contains IL1RL1, IL1RAP, KIT and MYD88. Post-translationally, ubiquitinated by SOCS6. KIT is rapidly ubiquitinated after autophosphorylation induced by KITLG/SCF binding, leading to internalization and degradation. Autophosphorylated on tyrosine residues. KITLG/SCF binding promotes autophosphorylation. Phosphorylated tyrosine residues are important for interaction with specific binding partners.

It is found in the cell membrane. It catalyses the reaction L-tyrosyl-[protein] + ATP = O-phospho-L-tyrosyl-[protein] + ADP + H(+). Present in an inactive conformation in the absence of bound ligand. KITLG/SCF binding leads to dimerization and activation by autophosphorylation on tyrosine residues. Activity is down-regulated by PRKCA-mediated phosphorylation on serine residues. Its function is as follows. Tyrosine-protein kinase that acts as a cell-surface receptor for the cytokine KITLG/SCF and plays an essential role in the regulation of cell survival and proliferation, hematopoiesis, stem cell maintenance, gametogenesis, mast cell development, migration and function, and in melanogenesis. In response to KITLG/SCF binding, KIT can activate several signaling pathways. Phosphorylates PIK3R1, PLCG1, SH2B2/APS and CBL. Activates the AKT1 signaling pathway by phosphorylation of PIK3R1, the regulatory subunit of phosphatidylinositol 3-kinase. Activated KIT also transmits signals via GRB2 and activation of RAS, RAF1 and the MAP kinases MAPK1/ERK2 and/or MAPK3/ERK1. Promotes activation of STAT family members STAT1, STAT3, STAT5A and STAT5B. Activation of PLCG1 leads to the production of the cellular signaling molecules diacylglycerol and inositol 1,4,5-trisphosphate. KIT signaling is modulated by protein phosphatases, and by rapid internalization and degradation of the receptor. Activated KIT promotes phosphorylation of the protein phosphatases PTPN6/SHP-1 and PTPRU, and of the transcription factors STAT1, STAT3, STAT5A and STAT5B. Promotes phosphorylation of PIK3R1, CBL, CRK (isoform Crk-II), LYN, MAPK1/ERK2 and/or MAPK3/ERK1, PLCG1, SRC and SHC1. This is Mast/stem cell growth factor receptor Kit (KIT) from Capra hircus (Goat).